The sequence spans 65 residues: Large ribosomal subunit protein bL35 (65 aa).

A disordered region spans residues 23–44; the sequence is KRMKAGKQHILTKKSQKTKRNL.

The protein belongs to the bacterial ribosomal protein bL35 family.

This chain is Large ribosomal subunit protein bL35, found in Lachnoclostridium phytofermentans (strain ATCC 700394 / DSM 18823 / ISDg) (Clostridium phytofermentans).